The sequence spans 180 residues: Non-structural protein 4 (180 aa).

2 helical membrane passes run 16–36 and 52–72; these read VCVH…VTVI and IVST…AILG.

Its subcellular location is the host membrane. The chain is Non-structural protein 4 (Segment-11) from Banna virus (BAV).